The following is a 72-amino-acid chain: SPbeta prophage-derived uncharacterized protein YopT (72 aa).

In terms of assembly, homodimer.

The polypeptide is SPbeta prophage-derived uncharacterized protein YopT (yopT) (Bacillus subtilis (strain 168)).